Here is a 677-residue protein sequence, read N- to C-terminus: UPF0652 protein (677 aa).

The segment at Glu-38–Lys-84 adopts a B box-type; atypical zinc-finger fold. The Zn(2+) site is built by Cys-43, Cys-46, Cys-66, and His-71. Residues Tyr-91 to Val-111 are compositionally biased toward basic and acidic residues. 2 disordered regions span residues Tyr-91–Ile-142 and Leu-156–Asp-192. Residues Asn-113–Asn-126 are compositionally biased toward low complexity. Polar residues predominate over residues His-163–Ile-178.

This sequence belongs to the UPF0652 family.

This chain is UPF0652 protein, found in Dictyostelium discoideum (Social amoeba).